The chain runs to 817 residues: DNA gyrase subunit A (817 aa).

Residues 39–505 enclose the Topo IIA-type catalytic domain; it reads LPDARDGLKP…AVEDVSIEDL (467 aa). Tyr127 (O-(5'-phospho-DNA)-tyrosine intermediate) is an active-site residue. Positions 532 to 538 match the GyrA-box motif; sequence QGRGGKG.

It belongs to the type II topoisomerase GyrA/ParC subunit family. Heterotetramer, composed of two GyrA and two GyrB chains. In the heterotetramer, GyrA contains the active site tyrosine that forms a transient covalent intermediate with DNA, while GyrB binds cofactors and catalyzes ATP hydrolysis.

It localises to the cytoplasm. The enzyme catalyses ATP-dependent breakage, passage and rejoining of double-stranded DNA.. Its function is as follows. A type II topoisomerase that negatively supercoils closed circular double-stranded (ds) DNA in an ATP-dependent manner to modulate DNA topology and maintain chromosomes in an underwound state. Negative supercoiling favors strand separation, and DNA replication, transcription, recombination and repair, all of which involve strand separation. Also able to catalyze the interconversion of other topological isomers of dsDNA rings, including catenanes and knotted rings. Type II topoisomerases break and join 2 DNA strands simultaneously in an ATP-dependent manner. This Aminobacterium colombiense (strain DSM 12261 / ALA-1) protein is DNA gyrase subunit A.